Here is a 380-residue protein sequence, read N- to C-terminus: Forkhead box protein F1 (380 aa).

The segment covering 1 to 19 (MTAEVQQPSVQTPAHSSPM) has biased composition (polar residues). The interval 1 to 49 (MTAEVQQPSVQTPAHSSPMTEKPVQTPVMETSSSSSSTKAKKTNAGIRR) is disordered. The fork-head DNA-binding region spans 52 to 146 (KPPYSYIALI…EEGSFRRRPR (95 aa)).

It localises to the nucleus. The sequence is that of Forkhead box protein F1 (foxf1) from Danio rerio (Zebrafish).